A 317-amino-acid chain; its full sequence is MKIVFMGTPDFSVPVLRRLIEDGYTIAAVVTQPDRPVGRKRVLTPPPVKVEAEKHQIPVLQPEKIRDEAELERLFSFEPDLIVTAAFGQILPNALLEYPKHGCINVHASLLPKYRGGAPIHQAIIDGEKETGITIMYMAEKLDAGDILTQVTVPIADDDHVGSLHNKLSEAGAALLAKTIPPLIKGELQSIPQDDQLATFAPNITREKEEIDWRKEGERIYNQIRGLHPWPVAYTLWNGKPMKIWWAEKVSSPKKEAPGTVIALEENGFLVATGDETALKVTDLQPAGKKRMLARDFLRGAGSQLSVGSVLGGQDGS.

109-112 serves as a coordination point for (6S)-5,6,7,8-tetrahydrofolate; sequence SLLP.

This sequence belongs to the Fmt family.

The enzyme catalyses L-methionyl-tRNA(fMet) + (6R)-10-formyltetrahydrofolate = N-formyl-L-methionyl-tRNA(fMet) + (6S)-5,6,7,8-tetrahydrofolate + H(+). Functionally, attaches a formyl group to the free amino group of methionyl-tRNA(fMet). The formyl group appears to play a dual role in the initiator identity of N-formylmethionyl-tRNA by promoting its recognition by IF2 and preventing the misappropriation of this tRNA by the elongation apparatus. The chain is Methionyl-tRNA formyltransferase from Halalkalibacterium halodurans (strain ATCC BAA-125 / DSM 18197 / FERM 7344 / JCM 9153 / C-125) (Bacillus halodurans).